Reading from the N-terminus, the 145-residue chain is Maximins 3/H9 type 1 (145 aa).

A signal peptide spans 1 to 18 (MNFKYIVAVSFLIASAYA). Propeptides lie at residues 19-43 (RSVQNDEQSLSQRDVLEEEESLREI) and 74-124 (RTAE…KEKR). Position 144 is an isoleucine amide (Ile-144).

This sequence belongs to the bombinin family. As to expression, expressed by the skin glands.

It localises to the secreted. Functionally, maximin-3 shows antibacterial activity against both Gram-positive and Gram-negative bacteria. It also shows antimicrobial activity against the fungus C.albicans, but not against A.flavus nor P.uticale. It has little hemolytic activity. It possess a significant cytotoxicity against tumor cell lines. It possess a significant anti-HIV activity. It shows high spermicidal activity. Its function is as follows. Maximin-H9 shows antimicrobial activity against bacteria and against the fungus C.albicans. Shows strong hemolytic activity. This is Maximins 3/H9 type 1 from Bombina maxima (Giant fire-bellied toad).